We begin with the raw amino-acid sequence, 271 residues long: Ferric vibriobactin reductase ViuB (271 aa).

Residues 8–131 (VYPRLLDFVR…IGPGGPDPLI (124 aa)) form the FAD-binding FR-type domain.

Belongs to the SIP oxidoreductase family. Requires FAD as cofactor.

It is found in the cytoplasm. It carries out the reaction 2 a Fe(II)-siderophore + NAD(+) + H(+) = 2 a Fe(III)-siderophore + NADH. In terms of biological role, ferric-siderophore reductase involved in iron removal from the siderophores after their transport into the cell. Involved in intracellular removal of iron from iron-vibriobactin complex. Vibriobactin is an iron-chelating compound involved in the transport of iron from the bacterial environment into the cell cytoplasm. Ferric-vibriobactin reductase catalyzing the reduction of Fe(3+)-vibriobactin, a catecholate siderophore synthesized by V.cholerae. This Vibrio cholerae serotype O1 (strain ATCC 39541 / Classical Ogawa 395 / O395) protein is Ferric vibriobactin reductase ViuB.